The primary structure comprises 92 residues: DNA/RNA-binding protein Alba (92 aa).

The residue at position 11 (lysine 11) is an N6-acetyllysine.

This sequence belongs to the histone-like Alba family. Acetylated. Acetylation at Lys-11 decreases DNA-binding affinity.

It localises to the cytoplasm. It is found in the chromosome. Functionally, binds double-stranded DNA tightly but without sequence specificity. Involved in DNA compaction. This is DNA/RNA-binding protein Alba from Pyrobaculum aerophilum (strain ATCC 51768 / DSM 7523 / JCM 9630 / CIP 104966 / NBRC 100827 / IM2).